Here is a 94-residue protein sequence, read N- to C-terminus: Conotoxin Qc6.1 (94 aa).

Residues 1 to 22 (MKLTCMMIVALLFLTAWTFVTA) form the signal peptide. A propeptide spanning residues 23 to 62 (VDSKNELENRGGWGQAGGWGKLFPMARDEMKNSEVSKLDN) is cleaved from the precursor. Cystine bridges form between Cys-66–Cys-84, Cys-73–Cys-88, and Cys-83–Cys-92.

The protein belongs to the conotoxin O1 superfamily. As to expression, expressed by the venom duct.

It localises to the secreted. The chain is Conotoxin Qc6.1 from Conus quercinus (Oak cone).